A 1744-amino-acid chain; its full sequence is Tanabin (1744 aa).

Residues 1 to 12 (MEGYLASVSLGE) are head. The tract at residues 8-48 (VSLGEESTQMWSLNKRLEAYLSRVKALEEENELLRKEIHSL) is coil 1A. The region spanning 13-320 (ESTQMWSLNK…SLLEAESTRI (308 aa)) is the IF rod domain. Residues 49–60 (RSSKSERCWKKK) form a linker 1 region. A coil 1B region spans residues 61–156 (HHEEMMKLRD…RDHEEEKALM (96 aa)). The tract at residues 157–179 (EEEIASFSQRLENFRVAPVAFKP) is linker 12. The tract at residues 180 to 193 (VEVDDYARKLSEIW) is coil 2A. The segment at 194–199 (QGAVEE) is linker 2. The tract at residues 200–314 (YKSEVSVLEA…EVATYRSLLE (115 aa)) is coil 2B. The tail stretch occupies residues 315–1744 (AESTRIYTDY…KKALRWKRMF (1430 aa)). Basic and acidic residues-rich tracts occupy residues 341–371 (RRRQSEDTRKTVSKDHRQSYSKKQIGDKNEL) and 785–815 (HSHHEETKTSESIAVEHNRMESEHAEVDKSS). 7 disordered regions span residues 341 to 372 (RRRQSEDTRKTVSKDHRQSYSKKQIGDKNELQ), 785 to 816 (HSHHEETKTSESIAVEHNRMESEHAEVDKSSE), 976 to 996 (EENQLSENEGNQNFGGNDIEE), 1032 to 1093 (SMED…QQED), 1340 to 1470 (DSDL…FGDV), 1485 to 1506 (SGLAQEPSYLGDNEESEDSMEN), and 1560 to 1722 (AREK…LNGH). The segment covering 980 to 990 (LSENEGNQNFG) has biased composition (polar residues). Acidic residues predominate over residues 1034 to 1056 (EDEEEQNNPETEDNIGLEQESDQ). The segment covering 1074–1086 (VVFKPEDMSDKSE) has biased composition (basic and acidic residues). The segment covering 1340–1351 (DSDLESTEEQVQ) has biased composition (acidic residues). Basic and acidic residues predominate over residues 1352 to 1367 (ETERIPFKPEDSKMEN). Residues 1368–1377 (ENSESEESVD) show a composition bias toward acidic residues. Residues 1386-1398 (HKSEEFEISKDYQ) are compositionally biased toward basic and acidic residues. The span at 1412–1421 (LEDEFEDLTE) shows a compositional bias: acidic residues. Positions 1423 to 1432 (PDVHEEHQNN) are enriched in basic and acidic residues. Residues 1433 to 1442 (DDSGASTFIT) are compositionally biased toward polar residues. Residues 1445–1460 (DEDKEREVRESVSKDE) are compositionally biased toward basic and acidic residues. Residues 1496–1505 (DNEESEDSME) show a composition bias toward acidic residues. 3 stretches are compositionally biased toward polar residues: residues 1576-1586 (EFTNENQSASP), 1597-1621 (EDSVISDNEGTTSSYEDLPNATSIS), and 1629-1639 (SNISTTEQSST). Acidic residues predominate over residues 1680–1691 (RSEDEELDDEGS). Residues 1698–1709 (NDEKANGEHKDV) are compositionally biased toward basic and acidic residues.

It belongs to the intermediate filament family. As to expression, growth cones of embryonic vertebrate neurons.

In Xenopus laevis (African clawed frog), this protein is Tanabin.